A 779-amino-acid chain; its full sequence is Probable ATP-dependent RNA helicase DHX40 (779 aa).

The interval 1–53 is disordered; the sequence is MSRFPAVAGRAPRRQEEGERPVELQEERPSAVRIADREEKGCTSQEGGTTPTF. The span at 13–41 shows a compositional bias: basic and acidic residues; sequence RRQEEGERPVELQEERPSAVRIADREEKG. Polar residues predominate over residues 42–53; that stretch reads CTSQEGGTTPTF. The Helicase ATP-binding domain occupies 63–231; the sequence is IQAVRDNSFL…FGNCPIFDIP (169 aa). 76–83 is a binding site for ATP; that stretch reads GNTGSGKT. Positions 173–176 match the DEAH box motif; the sequence is DEAH. The Helicase C-terminal domain maps to 263 to 442; that stretch reads TMDIHLNEMA…SVVLTLKCLA (180 aa).

This sequence belongs to the DEAD box helicase family. DEAH subfamily.

It carries out the reaction ATP + H2O = ADP + phosphate + H(+). In terms of biological role, probable ATP-dependent RNA helicase. In Rattus norvegicus (Rat), this protein is Probable ATP-dependent RNA helicase DHX40 (Dhx40).